A 95-amino-acid chain; its full sequence is Aspartyl/glutamyl-tRNA(Asn/Gln) amidotransferase subunit C (95 aa).

It belongs to the GatC family. Heterotrimer of A, B and C subunits.

It carries out the reaction L-glutamyl-tRNA(Gln) + L-glutamine + ATP + H2O = L-glutaminyl-tRNA(Gln) + L-glutamate + ADP + phosphate + H(+). The catalysed reaction is L-aspartyl-tRNA(Asn) + L-glutamine + ATP + H2O = L-asparaginyl-tRNA(Asn) + L-glutamate + ADP + phosphate + 2 H(+). Allows the formation of correctly charged Asn-tRNA(Asn) or Gln-tRNA(Gln) through the transamidation of misacylated Asp-tRNA(Asn) or Glu-tRNA(Gln) in organisms which lack either or both of asparaginyl-tRNA or glutaminyl-tRNA synthetases. The reaction takes place in the presence of glutamine and ATP through an activated phospho-Asp-tRNA(Asn) or phospho-Glu-tRNA(Gln). This chain is Aspartyl/glutamyl-tRNA(Asn/Gln) amidotransferase subunit C, found in Jannaschia sp. (strain CCS1).